A 100-amino-acid polypeptide reads, in one-letter code: Large ribosomal subunit protein bL21 (100 aa).

This sequence belongs to the bacterial ribosomal protein bL21 family. In terms of assembly, part of the 50S ribosomal subunit. Contacts protein L20.

Its function is as follows. This protein binds to 23S rRNA in the presence of protein L20. The protein is Large ribosomal subunit protein bL21 of Ureaplasma urealyticum serovar 10 (strain ATCC 33699 / Western).